The following is a 485-amino-acid chain: GTPase Der (485 aa).

2 EngA-type G domains span residues proline 3–glutamate 167 and proline 176–methionine 349. Residues glycine 9 to serine 16, aspartate 56 to phenylalanine 60, asparagine 119 to glutamate 122, glycine 182 to serine 189, aspartate 229 to valine 233, and asparagine 294 to aspartate 297 each bind GTP. Residues isoleucine 350–glutamate 434 enclose the KH-like domain. The disordered stretch occupies residues asparagine 435–lysine 485. A compositionally biased stretch (basic and acidic residues) spans arginine 457–asparagine 469. Residues arginine 470–lysine 485 are compositionally biased toward basic residues.

It belongs to the TRAFAC class TrmE-Era-EngA-EngB-Septin-like GTPase superfamily. EngA (Der) GTPase family. In terms of assembly, associates with the 50S ribosomal subunit.

GTPase that plays an essential role in the late steps of ribosome biogenesis. The protein is GTPase Der of Neisseria meningitidis serogroup B (strain ATCC BAA-335 / MC58).